The primary structure comprises 176 residues: Transcriptional repressor NrdR (176 aa).

The segment at 3–34 is a zinc-finger region; that stretch reads CPFCQHTDSRVLESRSAEAGQSVRRRRECLQC. An ATP-cone domain is found at 49-139; the sequence is ITVIKRNQDR…VYRQFRGIRD (91 aa). A disordered region spans residues 151 to 176; that stretch reads GDGPLPSVLDEPYEDTAQPTIMISPQ. The span at 167-176 shows a compositional bias: polar residues; it reads AQPTIMISPQ.

It belongs to the NrdR family. Zn(2+) is required as a cofactor.

In terms of biological role, negatively regulates transcription of bacterial ribonucleotide reductase nrd genes and operons by binding to NrdR-boxes. This Acaryochloris marina (strain MBIC 11017) protein is Transcriptional repressor NrdR.